The primary structure comprises 264 residues: Thymidylate synthase (264 aa).

Arg21 contacts dUMP. Position 51 (His51) interacts with (6R)-5,10-methylene-5,6,7,8-tetrahydrofolate. 126-127 (RR) serves as a coordination point for dUMP. The active-site Nucleophile is Cys146. Residues 166–169 (RSAD), Asn177, and 207–209 (HLY) contribute to the dUMP site. Asp169 lines the (6R)-5,10-methylene-5,6,7,8-tetrahydrofolate pocket. (6R)-5,10-methylene-5,6,7,8-tetrahydrofolate is bound at residue Ser263.

It belongs to the thymidylate synthase family. Bacterial-type ThyA subfamily. In terms of assembly, homodimer.

It localises to the cytoplasm. It catalyses the reaction dUMP + (6R)-5,10-methylene-5,6,7,8-tetrahydrofolate = 7,8-dihydrofolate + dTMP. It functions in the pathway pyrimidine metabolism; dTTP biosynthesis. In terms of biological role, catalyzes the reductive methylation of 2'-deoxyuridine-5'-monophosphate (dUMP) to 2'-deoxythymidine-5'-monophosphate (dTMP) while utilizing 5,10-methylenetetrahydrofolate (mTHF) as the methyl donor and reductant in the reaction, yielding dihydrofolate (DHF) as a by-product. This enzymatic reaction provides an intracellular de novo source of dTMP, an essential precursor for DNA biosynthesis. This is Thymidylate synthase from Laribacter hongkongensis (strain HLHK9).